We begin with the raw amino-acid sequence, 185 residues long: NADH-ubiquinone oxidoreductase chain 6 (185 aa).

Transmembrane regions (helical) follow at residues 4-24 (LTYY…IFII), 33-53 (ILYM…IGLG), 54-74 (IFSL…FLFI), 94-114 (LPLV…IYSN), and 159-179 (AFIL…PISI).

Belongs to the complex I subunit 6 family. Complex I is composed of 37 different subunits.

The protein resides in the mitochondrion membrane. It catalyses the reaction a ubiquinone + NADH + 5 H(+)(in) = a ubiquinol + NAD(+) + 4 H(+)(out). Core subunit of the mitochondrial membrane respiratory chain NADH dehydrogenase (Complex I) that is believed to belong to the minimal assembly required for catalysis. Complex I functions in the transfer of electrons from NADH to the respiratory chain. The immediate electron acceptor for the enzyme is believed to be ubiquinone. The protein is NADH-ubiquinone oxidoreductase chain 6 (ND6) of Yarrowia lipolytica (strain CLIB 122 / E 150) (Yeast).